Reading from the N-terminus, the 345-residue chain is Aspartate--ammonia ligase (345 aa).

The protein belongs to the class-II aminoacyl-tRNA synthetase family. AsnA subfamily.

The protein localises to the cytoplasm. The enzyme catalyses L-aspartate + NH4(+) + ATP = L-asparagine + AMP + diphosphate + H(+). The protein operates within amino-acid biosynthesis; L-asparagine biosynthesis; L-asparagine from L-aspartate (ammonia route): step 1/1. This is Aspartate--ammonia ligase from Bacteroides thetaiotaomicron (strain ATCC 29148 / DSM 2079 / JCM 5827 / CCUG 10774 / NCTC 10582 / VPI-5482 / E50).